A 289-amino-acid chain; its full sequence is SAGA-associated factor 29kDa (289 aa).

Positions 9–36 (AQQIQDRLKDIQQNIHNVDEERRRAENS) form a coiled coil. In terms of domain architecture, SGF29 C-terminal spans 137–278 (GNYVAKVGDN…VIAYRPTKKG (142 aa)). Histone H3K4me3 N-terminus binding regions lie at residues 179–181 (DID) and 225–228 (QTTC). Positions 249-251 (FED) are histone H3K4me3 binding.

Belongs to the SGF29 family. As to quaternary structure, component of the Spt-Ada-Gcn5 acetyltransferase (SAGA) complex consisting of wda/Taf5L, Saf6, Taf9, Taf10b, Taf12, Ada1, Spt3, Spt7, Spt20, Sf3b3, Sf3b5, Nipped-A/Tra1, a histone acetyltransferase (HAT) module made up of Gcn5, Ada2b (Isoform B), Ada3 and Sgf29, and a deubiquitinase (DUB) module made up of not/nonstop, Sgf11, Atxn7 and e(y)2. Component of the Chiffon histone acetyltransferase (CHAT) complex consisting of Ada3, Sgf29, Gcn5, chif/chiffon and Ada2b (Isoform A).

It is found in the nucleus. In terms of biological role, component of both the SAGA and CHAT histone acetyltransferase complexes, which both predominantly acetylate histone H3. This chain is SAGA-associated factor 29kDa, found in Drosophila melanogaster (Fruit fly).